The sequence spans 125 residues: MANLMMRLPISLRSFSVSASSSNGSPPVIGGSSGGVGPMIVELPLEKIRRPLMRTRSNDQNKVKELMDSIRQIGLQVPIDVIEVDGTYYGFSGCHRYEAHQKLGLPTIRCKIRKGTKETLRHHLR.

The transit peptide at 1-22 (MANLMMRLPISLRSFSVSASSS) directs the protein to the chloroplast and mitochondrion.

This sequence belongs to the sulfiredoxin family. Low expression in photosynthetic tissues such as leaves and sepals.

The protein localises to the plastid. Its subcellular location is the chloroplast. The protein resides in the mitochondrion. The catalysed reaction is S-hydroxy-S-oxy-L-cysteinyl-[peroxiredoxin] + [protein]-dithiol + ATP = S-hydroxy-L-cysteinyl-[peroxiredoxin] + [protein]-disulfide + ADP + phosphate. Its function is as follows. Contributes to oxidative stress resistance by reducing cysteine-sulfinic acid formed under exposure to oxidants in a peroxiredoxin. May catalyze the reduction in a multi-step process by acting both as a specific phosphotransferase and a thioltransferase. Required to switch on the antioxidant pathway to regenerate the oxidative damage. In mitochondrion, catalyzes the retroreduction of the inactive sulfinic form of atypical Prx IIF using thioredoxin as reducing agent. The protein is Sulfiredoxin, chloroplastic/mitochondrial (SRX) of Arabidopsis thaliana (Mouse-ear cress).